Reading from the N-terminus, the 245-residue chain is tRNA pseudouridine synthase A (245 aa).

The Nucleophile role is filled by Asp52. Tyr111 contacts substrate.

Belongs to the tRNA pseudouridine synthase TruA family. In terms of assembly, homodimer.

The catalysed reaction is uridine(38/39/40) in tRNA = pseudouridine(38/39/40) in tRNA. Formation of pseudouridine at positions 38, 39 and 40 in the anticodon stem and loop of transfer RNAs. The polypeptide is tRNA pseudouridine synthase A (Rickettsia typhi (strain ATCC VR-144 / Wilmington)).